The following is a 290-amino-acid chain: Acetyl-coenzyme A carboxylase carboxyl transferase subunit beta (290 aa).

The CoA carboxyltransferase N-terminal domain occupies 27–290 (LWVKCPSCEA…LQRQPADALA (264 aa)). Zn(2+)-binding residues include Cys-31, Cys-34, Cys-50, and Cys-53. A C4-type zinc finger spans residues 31–53 (CPSCEAVLYRNDVDANLHVCPKC).

The protein belongs to the AccD/PCCB family. Acetyl-CoA carboxylase is a heterohexamer composed of biotin carboxyl carrier protein (AccB), biotin carboxylase (AccC) and two subunits each of ACCase subunit alpha (AccA) and ACCase subunit beta (AccD). Zn(2+) serves as cofactor.

It localises to the cytoplasm. The enzyme catalyses N(6)-carboxybiotinyl-L-lysyl-[protein] + acetyl-CoA = N(6)-biotinyl-L-lysyl-[protein] + malonyl-CoA. It participates in lipid metabolism; malonyl-CoA biosynthesis; malonyl-CoA from acetyl-CoA: step 1/1. Functionally, component of the acetyl coenzyme A carboxylase (ACC) complex. Biotin carboxylase (BC) catalyzes the carboxylation of biotin on its carrier protein (BCCP) and then the CO(2) group is transferred by the transcarboxylase to acetyl-CoA to form malonyl-CoA. The sequence is that of Acetyl-coenzyme A carboxylase carboxyl transferase subunit beta from Burkholderia cenocepacia (strain ATCC BAA-245 / DSM 16553 / LMG 16656 / NCTC 13227 / J2315 / CF5610) (Burkholderia cepacia (strain J2315)).